The sequence spans 707 residues: Methionine--tRNA ligase (707 aa).

Positions 13–23 (PYANGNFHIGH) match the 'HIGH' region motif. Positions 147, 150, 160, and 163 each coordinate Zn(2+). The 'KMSKS' region motif lies at 344 to 348 (KMSKS). Lys-347 contributes to the ATP binding site. The 107-residue stretch at 601-707 (DFAKVDLRIA…PGATPGMRIH (107 aa)) folds into the tRNA-binding domain.

Belongs to the class-I aminoacyl-tRNA synthetase family. MetG type 1 subfamily. Homodimer. It depends on Zn(2+) as a cofactor.

The protein resides in the cytoplasm. The catalysed reaction is tRNA(Met) + L-methionine + ATP = L-methionyl-tRNA(Met) + AMP + diphosphate. Functionally, is required not only for elongation of protein synthesis but also for the initiation of all mRNA translation through initiator tRNA(fMet) aminoacylation. The polypeptide is Methionine--tRNA ligase (Polaromonas naphthalenivorans (strain CJ2)).